A 216-amino-acid polypeptide reads, in one-letter code: ATP phosphoribosyltransferase (216 aa).

Belongs to the ATP phosphoribosyltransferase family. Short subfamily. As to quaternary structure, heteromultimer composed of HisG and HisZ subunits.

The protein resides in the cytoplasm. It catalyses the reaction 1-(5-phospho-beta-D-ribosyl)-ATP + diphosphate = 5-phospho-alpha-D-ribose 1-diphosphate + ATP. The protein operates within amino-acid biosynthesis; L-histidine biosynthesis; L-histidine from 5-phospho-alpha-D-ribose 1-diphosphate: step 1/9. Catalyzes the condensation of ATP and 5-phosphoribose 1-diphosphate to form N'-(5'-phosphoribosyl)-ATP (PR-ATP). Has a crucial role in the pathway because the rate of histidine biosynthesis seems to be controlled primarily by regulation of HisG enzymatic activity. This is ATP phosphoribosyltransferase from Streptococcus thermophilus (strain ATCC BAA-491 / LMD-9).